Consider the following 88-residue polypeptide: UPF0297 protein SSA_2241 (88 aa).

It belongs to the UPF0297 family.

In Streptococcus sanguinis (strain SK36), this protein is UPF0297 protein SSA_2241.